The primary structure comprises 277 residues: Large ribosomal subunit protein uL2 (277 aa).

The disordered stretch occupies residues 218-277 (PTVRGSVMNPNDHPHGGGEGKSPIGHPSPLTPWGKPALGYKTRKNKKYSDGMIIKRRGQK).

This sequence belongs to the universal ribosomal protein uL2 family. Part of the 50S ribosomal subunit. Forms a bridge to the 30S subunit in the 70S ribosome.

One of the primary rRNA binding proteins. Required for association of the 30S and 50S subunits to form the 70S ribosome, for tRNA binding and peptide bond formation. It has been suggested to have peptidyltransferase activity; this is somewhat controversial. Makes several contacts with the 16S rRNA in the 70S ribosome. This Clostridium novyi (strain NT) protein is Large ribosomal subunit protein uL2.